The following is a 358-amino-acid chain: Magnesium-protoporphyrin IX monomethyl ester [oxidative] cyclase 2 (358 aa).

Belongs to the AcsF family. The cofactor is Fe cation.

The enzyme catalyses Mg-protoporphyrin IX 13-monomethyl ester + 3 NADPH + 3 O2 + 2 H(+) = 3,8-divinyl protochlorophyllide a + 3 NADP(+) + 5 H2O. It functions in the pathway porphyrin-containing compound metabolism; chlorophyll biosynthesis (light-independent). Catalyzes the formation of the isocyclic ring in chlorophyll biosynthesis. Mediates the cyclase reaction, which results in the formation of divinylprotochlorophyllide (Pchlide) characteristic of all chlorophylls from magnesium-protoporphyrin IX 13-monomethyl ester (MgPMME). This chain is Magnesium-protoporphyrin IX monomethyl ester [oxidative] cyclase 2, found in Synechocystis sp. (strain ATCC 27184 / PCC 6803 / Kazusa).